The primary structure comprises 205 residues: HTH-type transcriptional regulator PksA (205 aa).

The region spanning 8 to 68 is the HTH tetR-type domain; the sequence is EKRRKQIAEA…FAMKLVQEKV (61 aa). The H-T-H motif DNA-binding region spans 31-50; it reads SARNIAKEAGLSLGALRHYF.

Transcriptional regulation of the polyketide synthase operon. This chain is HTH-type transcriptional regulator PksA (pksA), found in Bacillus subtilis (strain 168).